Consider the following 70-residue polypeptide: Probable rubredoxin HupI (70 aa).

The Rubredoxin-like domain maps to 15-66 (DDRMECGICWHVYDPAEGDPVWQIPPGTPFSNLTEDWRCPNCDALQSKFMRL). Fe cation is bound by residues C20, C23, C53, and C56.

It belongs to the rubredoxin family. Fe(3+) is required as a cofactor.

In terms of biological role, could be an electron transport intermediate in hydrogen oxidation. The sequence is that of Probable rubredoxin HupI (hupI) from Rhizobium leguminosarum bv. viciae.